The sequence spans 473 residues: Photosystem II CP43 reaction center protein (473 aa).

The propeptide occupies 1–14 (MKNLYSLRRFYHVE). Thr-15 carries the post-translational modification N-acetylthreonine. Thr-15 carries the phosphothreonine modification. The next 5 helical transmembrane spans lie at 69-93 (LFEV…PHLA), 134-155 (LVGP…KDKN), 178-200 (KAMY…RIIS), 255-275 (KPWA…LSYS), and 291-312 (WFNT…ASQS). A [CaMn4O5] cluster-binding site is contributed by Glu-367. A helical membrane pass occupies residues 447–471 (RARAAAAGFEKGIDRDNEPVLSMRP).

The protein belongs to the PsbB/PsbC family. PsbC subfamily. In terms of assembly, PSII is composed of 1 copy each of membrane proteins PsbA, PsbB, PsbC, PsbD, PsbE, PsbF, PsbH, PsbI, PsbJ, PsbK, PsbL, PsbM, PsbT, PsbX, PsbY, PsbZ, Psb30/Ycf12, at least 3 peripheral proteins of the oxygen-evolving complex and a large number of cofactors. It forms dimeric complexes. It depends on Binds multiple chlorophylls and provides some of the ligands for the Ca-4Mn-5O cluster of the oxygen-evolving complex. It may also provide a ligand for a Cl- that is required for oxygen evolution. PSII binds additional chlorophylls, carotenoids and specific lipids. as a cofactor.

It localises to the plastid. Its subcellular location is the chloroplast thylakoid membrane. Its function is as follows. One of the components of the core complex of photosystem II (PSII). It binds chlorophyll and helps catalyze the primary light-induced photochemical processes of PSII. PSII is a light-driven water:plastoquinone oxidoreductase, using light energy to abstract electrons from H(2)O, generating O(2) and a proton gradient subsequently used for ATP formation. This chain is Photosystem II CP43 reaction center protein, found in Chlorella vulgaris (Green alga).